We begin with the raw amino-acid sequence, 282 residues long: MALVLILQLLTLWPLCHTDITPSVPPASYHPKPWLGAQPATVVTPGVNVTLRCRAPQPAWRFGLFKPGEIAPLLFRDVSSELAEFFLEEVTPAQGGIYRCCYRRPDWGPGVWSQPSDVLELLVTEELPRPSLVALPGPVVGPGANVSLRCAGRLRNMSFVLYREGVAAPLQYRHSAQPWADFTLLGARAPGTYSCYYHTPSAPYVLSQRSEVLVISWEGEGPEARPASSAPGMQAPGPPPSDPGAQAPSLSSFRPRGLVLQPLLPQTQDSWDPAPPPSDPGV.

The N-terminal stretch at 1–18 (MALVLILQLLTLWPLCHT) is a signal peptide. Ig-like domains lie at 22-116 (PSVP…SQPS) and 126-219 (ELPR…SWEG). An N-linked (GlcNAc...) asparagine glycan is attached at N48. C53 and C100 are joined by a disulfide. N145 carries an N-linked (GlcNAc...) asparagine glycan. Positions 221 to 282 (GPEARPASSA…PAPPPSDPGV (62 aa)) are disordered. Pro residues predominate over residues 273–282 (PAPPPSDPGV).

It belongs to the leukocyte receptor complex/polymeric immunoglobulin receptor (PIR/LRC) family.

It is found in the secreted. The protein localises to the cell membrane. Functionally, regulator of osteoclastogenesis which plays an important bone-specific function in osteoclast differentiation. This Homo sapiens (Human) protein is Osteoclast-associated immunoglobulin-like receptor (OSCAR).